The chain runs to 485 residues: Aspartyl/glutamyl-tRNA(Asn/Gln) amidotransferase subunit B (485 aa).

This sequence belongs to the GatB/GatE family. GatB subfamily. As to quaternary structure, heterotrimer of A, B and C subunits.

It carries out the reaction L-glutamyl-tRNA(Gln) + L-glutamine + ATP + H2O = L-glutaminyl-tRNA(Gln) + L-glutamate + ADP + phosphate + H(+). It catalyses the reaction L-aspartyl-tRNA(Asn) + L-glutamine + ATP + H2O = L-asparaginyl-tRNA(Asn) + L-glutamate + ADP + phosphate + 2 H(+). Its function is as follows. Allows the formation of correctly charged Asn-tRNA(Asn) or Gln-tRNA(Gln) through the transamidation of misacylated Asp-tRNA(Asn) or Glu-tRNA(Gln) in organisms which lack either or both of asparaginyl-tRNA or glutaminyl-tRNA synthetases. The reaction takes place in the presence of glutamine and ATP through an activated phospho-Asp-tRNA(Asn) or phospho-Glu-tRNA(Gln). This is Aspartyl/glutamyl-tRNA(Asn/Gln) amidotransferase subunit B from Cupriavidus pinatubonensis (strain JMP 134 / LMG 1197) (Cupriavidus necator (strain JMP 134)).